The primary structure comprises 222 residues: N-(5'-phosphoribosyl)anthranilate isomerase (222 aa).

It belongs to the TrpF family.

It carries out the reaction N-(5-phospho-beta-D-ribosyl)anthranilate = 1-(2-carboxyphenylamino)-1-deoxy-D-ribulose 5-phosphate. It participates in amino-acid biosynthesis; L-tryptophan biosynthesis; L-tryptophan from chorismate: step 3/5. The polypeptide is N-(5'-phosphoribosyl)anthranilate isomerase (Xanthomonas campestris pv. campestris (strain 8004)).